Reading from the N-terminus, the 439-residue chain is GTPase Obg (439 aa).

The Obg domain maps to 3–162; sequence GEFYDSARIF…REIELELKLL (160 aa). The OBG-type G domain occupies 163–333; the sequence is ADVGLIGFPN…LLQRVAERLR (171 aa). GTP contacts are provided by residues 169–176, 194–198, 215–218, 285–288, and 314–316; these read GFPNAGKS, FTTLQ, DIPG, NKAD, and SAA. 2 residues coordinate Mg(2+): Ser-176 and Thr-196. The OCT domain occupies 351-428; sequence VPEVDERLYT…IEQAAFDWED (78 aa).

Belongs to the TRAFAC class OBG-HflX-like GTPase superfamily. OBG GTPase family. In terms of assembly, monomer. The cofactor is Mg(2+).

Its subcellular location is the cytoplasm. Its function is as follows. An essential GTPase which binds GTP, GDP and possibly (p)ppGpp with moderate affinity, with high nucleotide exchange rates and a fairly low GTP hydrolysis rate. Plays a role in control of the cell cycle, stress response, ribosome biogenesis and in those bacteria that undergo differentiation, in morphogenesis control. This is GTPase Obg from Roseiflexus castenholzii (strain DSM 13941 / HLO8).